The chain runs to 792 residues: Phenylalanine--tRNA ligase beta subunit (792 aa).

The tRNA-binding domain occupies 39–154 (LYSFASVITA…EATPLGEDLA (116 aa)). The B5 domain maps to 403-480 (RELKEVALRP…ESWNIETQNP (78 aa)). Mg(2+) is bound by residues Asp456, Asp462, Glu465, and Glu466. The region spanning 695-791 (AIYPSSFRDL…LLTDTKGTIN (97 aa)) is the FDX-ACB domain.

This sequence belongs to the phenylalanyl-tRNA synthetase beta subunit family. Type 1 subfamily. As to quaternary structure, tetramer of two alpha and two beta subunits. The cofactor is Mg(2+).

Its subcellular location is the cytoplasm. The catalysed reaction is tRNA(Phe) + L-phenylalanine + ATP = L-phenylalanyl-tRNA(Phe) + AMP + diphosphate + H(+). In Chlamydia pneumoniae (Chlamydophila pneumoniae), this protein is Phenylalanine--tRNA ligase beta subunit (pheT).